The chain runs to 952 residues: Glutamate receptor 2.7 (952 aa).

The signal sequence occupies residues 1-32 (MKVMNPRKTNNTFMYYFVLFVCGFVLMEGCLG). At 33–582 (QNQTTEIKVG…NTWVFLRPWS (550 aa)) the chain is on the extracellular side. Residues Asn-34, Asn-60, Asn-355, Asn-428, and Asn-546 are each glycosylated (N-linked (GlcNAc...) asparagine). The chain crosses the membrane as a helical span at residues 583 to 603 (LDLWVTTACFFVFIGFIVWIL). Over 604-612 (EHRVNTDFR) the chain is Cytoplasmic. The helical transmembrane segment at 613-633 (GPPHHQIGTSFWFAFSTMNFA) threads the bilayer. Residues 634–637 (HREK) lie on the Cytoplasmic side of the membrane. A helical transmembrane segment spans residues 638–658 (VVSNLARFVVLVWCFVVLVLI). The Extracellular portion of the chain corresponds to 659 to 821 (QSYTANLTSF…LSSNHLSLSS (163 aa)). N-linked (GlcNAc...) asparagine glycans are attached at residues Asn-664, Asn-728, Asn-748, Asn-784, and Asn-809. A helical transmembrane segment spans residues 822–842 (FWGLFLIAGIASFLALLIFVA). Topologically, residues 843 to 952 (NFLYEHKHTL…ESAIIQCEGE (110 aa)) are cytoplasmic. The span at 889-908 (VSSPITQGSSSPLTDQSTPL) shows a compositional bias: polar residues. Disordered stretches follow at residues 889–914 (VSSP…SPEQ) and 932–952 (FTTQ…CEGE).

The protein belongs to the glutamate-gated ion channel (TC 1.A.10.1) family. May form heteromers. As to expression, expressed predominantly in leaves.

It is found in the membrane. In terms of biological role, glutamate-gated receptor that probably acts as a non-selective cation channel. May be involved in light-signal transduction and calcium homeostasis via the regulation of calcium influx into cells. The chain is Glutamate receptor 2.7 (GLR2.7) from Arabidopsis thaliana (Mouse-ear cress).